A 96-amino-acid polypeptide reads, in one-letter code: uncharacterized protein (96 aa).

The protein resides in the mitochondrion. This is an uncharacterized protein from Schizosaccharomyces pombe (strain 972 / ATCC 24843) (Fission yeast).